A 238-amino-acid polypeptide reads, in one-letter code: Cysteine-rich venom protein pseudechetoxin (238 aa).

The signal sequence occupies residues 1–19 (MIAFIVLLSLAAVLQQSSG). A propeptide spanning residues 20 to 27 (TADFASES) is cleaved from the precursor. The 127-residue stretch at 38-164 (VDKHNALRRS…SSKYLYVCQY (127 aa)) folds into the SCP domain. T51 and S106 together coordinate Zn(2+). Disulfide bonds link C75/C153, C92/C165, C148/C162, C184/C191, C187/C196, C200/C233, C209/C227, and C218/C231. Residues 200–233 (CKRNNDFSNCKSLAKKSKCQTEWIKKKCPASCFC) enclose the ShKT domain.

As to expression, expressed by the venom gland.

Its subcellular location is the secreted. Blocks olfactory (CNGA2) and retinal (CNGA1) cyclic nucleotide-gated (CNG) ion channel currents. Does not inhibit retinal (CNGA3) currents. It forms high-affinity contacts with the pore turret region and most likely inhibits CNG channel current by blocking the external entrance to the transmembrane pore. Is really more potent that Pseudecin. Does not affect neither depolarization- nor caffeine-induced contraction arterial smooth muscle. This chain is Cysteine-rich venom protein pseudechetoxin, found in Pseudechis australis (Mulga snake).